A 146-amino-acid chain; its full sequence is Large ribosomal subunit protein uL23m (146 aa).

The segment at 108-138 (PDLFPEKDPRSPEPLEEELPQQRQSSDLRCP) is disordered. Basic and acidic residues predominate over residues 111–120 (FPEKDPRSPE).

The protein belongs to the universal ribosomal protein uL23 family. As to quaternary structure, component of the mitochondrial ribosome large subunit (39S) which comprises a 16S rRNA and about 50 distinct proteins.

It is found in the mitochondrion. The protein is Large ribosomal subunit protein uL23m (Mrpl23) of Mus musculus (Mouse).